A 327-amino-acid polypeptide reads, in one-letter code: Methionyl-tRNA formyltransferase (327 aa).

A (6S)-5,6,7,8-tetrahydrofolate-binding site is contributed by 121–124; it reads SLLP.

This sequence belongs to the Fmt family.

It catalyses the reaction L-methionyl-tRNA(fMet) + (6R)-10-formyltetrahydrofolate = N-formyl-L-methionyl-tRNA(fMet) + (6S)-5,6,7,8-tetrahydrofolate + H(+). Attaches a formyl group to the free amino group of methionyl-tRNA(fMet). The formyl group appears to play a dual role in the initiator identity of N-formylmethionyl-tRNA by promoting its recognition by IF2 and preventing the misappropriation of this tRNA by the elongation apparatus. This Burkholderia ambifaria (strain MC40-6) protein is Methionyl-tRNA formyltransferase.